Reading from the N-terminus, the 539-residue chain is MIPSSKPNSRVELRFRCHHLKNLDIVSKSDPQIFISEKRGPGGFQFVDCTEKIKNNLSPEFKKTITLDYYFEEIQTLTFTVMDIDKEITLFGDLDKNDKIGEFTTSLSNILSRPGRKIVADLIHHSKVTGKIEISAEEICQTNHHIFLSAEGIGLDKKDLFSSDPYYKIYKTNPNGEQLLVFQSIVIKSNVNPLWPELHMELEKFNGGDMFRELLIEVYDYDSIGAHDLIGITRTTTDAILRGVIEYPLINPKKTSKSGYKNSGILKFYKVRLEKTHTFLEFLAGGCEISLMTAIDCTGSNGSVNSFSGLHYNDLEKGGSAYARSIASVGSVLSSYDSDGFIDVFGFGGEYQGRTSHCFPFSLDPNVPSAFGVAGVLEMYNRNISKIPFSGPTNFASVIQEAIARASESRLPYQQKYTVLLIITDGEICDMDETIKCLVQASNLPLSVVIVGVGLSSFENMNLLDGDNGCLVDYKGNRAKRDIVQFVPFNKYSGNINALAQETLKEIPGQLLSYFKSIGVPPNPPRTFIPVDILPPPPQ.

C2 domains are found at residues 1–120 and 128–251; these read MIPS…KIVA and VTGK…PLIN. Ca(2+)-binding residues include Leu-23, Asp-24, Asp-30, Asp-83, Asp-85, and Asp-98. The VWFA domain maps to 290–507; it reads SLMTAIDCTG…ALAQETLKEI (218 aa).

This sequence belongs to the copine family. Ca(2+) serves as cofactor.

This chain is Copine-C (cpnC), found in Dictyostelium discoideum (Social amoeba).